The following is a 201-amino-acid chain: ATP-dependent Clp protease proteolytic subunit (201 aa).

Ser98 serves as the catalytic Nucleophile. His123 is a catalytic residue.

This sequence belongs to the peptidase S14 family. In terms of assembly, fourteen ClpP subunits assemble into 2 heptameric rings which stack back to back to give a disk-like structure with a central cavity, resembling the structure of eukaryotic proteasomes.

The protein localises to the cytoplasm. The catalysed reaction is Hydrolysis of proteins to small peptides in the presence of ATP and magnesium. alpha-casein is the usual test substrate. In the absence of ATP, only oligopeptides shorter than five residues are hydrolyzed (such as succinyl-Leu-Tyr-|-NHMec, and Leu-Tyr-Leu-|-Tyr-Trp, in which cleavage of the -Tyr-|-Leu- and -Tyr-|-Trp bonds also occurs).. Functionally, cleaves peptides in various proteins in a process that requires ATP hydrolysis. Has a chymotrypsin-like activity. Plays a major role in the degradation of misfolded proteins. The protein is ATP-dependent Clp protease proteolytic subunit of Rickettsia canadensis (strain McKiel).